Reading from the N-terminus, the 128-residue chain is L-ectoine synthase (128 aa).

It belongs to the ectoine synthase family.

The enzyme catalyses (2S)-4-acetamido-2-aminobutanoate = L-ectoine + H2O. The protein operates within amine and polyamine biosynthesis; ectoine biosynthesis; L-ectoine from L-aspartate 4-semialdehyde: step 3/3. In terms of biological role, catalyzes the circularization of gamma-N-acetyl-alpha,gamma-diaminobutyric acid (ADABA) to ectoine (1,4,5,6-tetrahydro-2-methyl-4-pyrimidine carboxylic acid), which is an excellent osmoprotectant. The chain is L-ectoine synthase from Virgibacillus pantothenticus.